Reading from the N-terminus, the 571-residue chain is OTU domain-containing protein 5 (571 aa).

Disordered stretches follow at residues 1–111 and 146–175; these read MTIL…GPGG and PGHS…GAGY. Positions 11–30 are enriched in pro residues; that stretch reads PPDADPANEPPPPGPMPPAP. Positions 32-47 are enriched in gly residues; that stretch reads RGGGVGVGGGGTGVGG. Positions 63–75 are enriched in pro residues; sequence ASPPPQGPLPGPP. S64 is subject to Phosphoserine. The span at 84-97 shows a compositional bias: low complexity; the sequence is AVPPGAVAGPRPQQ. The residue at position 165 (S165) is a Phosphoserine. Phosphotyrosine is present on Y175. S177 is modified (phosphoserine). T195 carries the phosphothreonine modification. An OTU domain is found at 213–341; the sequence is FIIKQMKEDG…NIHYNSVVNP (129 aa). A cys-loop region spans residues 218–224; it reads MKEDGAC. D221 is an active-site residue. The active-site Nucleophile is the C224. A variable-loop region spans residues 273–283; that stretch reads KRKNNCHGNHI. S328 is modified (phosphoserine; by MTOR). Positions 329–334 are his-loop; that stretch reads YHRNIH. H334 is an active-site residue. Phosphoserine occurs at positions 337 and 375. A disordered region spans residues 418 to 502; sequence ARQVRGPSQP…PGTSSQFSAG (85 aa). 2 stretches are compositionally biased toward low complexity: residues 430 to 443 and 450 to 462; these read ASAT…AASS and SRSP…ASSP. S452 bears the Phosphoserine mark. Residue T507 is modified to Phosphothreonine. A Phosphoserine; by MTOR modification is found at S508.

Belongs to the peptidase C85 family. Interacts with TRAF3. Phosphorylation at Ser-177 is required for deubiquitinating activity. Phosphorylation at Ser-328, Ser-337 and Ser-508 by MTOR promotes its activity. As to expression, expressed in various tissues, including the liver and placenta, as well as in peripheral blood leukocytes.

It is found in the nucleus. It carries out the reaction Thiol-dependent hydrolysis of ester, thioester, amide, peptide and isopeptide bonds formed by the C-terminal Gly of ubiquitin (a 76-residue protein attached to proteins as an intracellular targeting signal).. Inhibited by N-ethyl-maleimide (NEM). In terms of biological role, deubiquitinating enzyme that functions as a negative regulator of the innate immune system. Has peptidase activity towards 'Lys-48'- and 'Lys-63'-linked polyubiquitin chains. Can also cleave 'Lys-11'-linked ubiquitin chains (in vitro). Acts via TRAF3 deubiquitination and subsequent suppression of type I interferon (IFN) production. Controls neuroectodermal differentiation through cleaving 'Lys-48'-linked ubiquitin chains to counteract degradation of select chromatin regulators such as ARID1A, HDAC2 and HCF1. Acts as a positive regulator of mTORC1 and mTORC2 signaling following phosphorylation by MTOR: acts by mediating deubiquitination of BTRC, leading to its stability. The sequence is that of OTU domain-containing protein 5 from Homo sapiens (Human).